The following is a 116-amino-acid chain: Endocuticle structural glycoprotein ABD-4 (116 aa).

Pyrrolidone carboxylic acid is present on Q1. The 73-residue stretch at 20 to 92 (DGSYQWNYET…PQGAHFPTPP (73 aa)) folds into the Chitin-binding type R&amp;R domain. The segment at 78-97 (ENGFVPQGAHFPTPPPIPPA) is disordered. T90 carries O-linked (GalNAc) threonine; in ADB-4A, ABD-4B and ABD-4C glycosylation. An O-linked (GalNAc) threonine; in ADB-4A and ABD-4B glycan is attached at T107. O-linked (GalNAc) threonine; in ADB-4A glycosylation occurs at T111. Position 116 is a proline amide (P116).

In terms of processing, 3 variants exists that arise from a sequential glycosylation with N-acetylgalactosamine at three (ABD-4A), two (ABD-4B) or one (ABD-4C) threonine residues.

Component of the soft endocuticle of migratory locust. In Locusta migratoria (Migratory locust), this protein is Endocuticle structural glycoprotein ABD-4.